The sequence spans 99 residues: Protein RnfH (99 aa).

Belongs to the UPF0125 (RnfH) family.

This chain is Protein RnfH, found in Buchnera aphidicola subsp. Acyrthosiphon pisum (strain 5A).